We begin with the raw amino-acid sequence, 57 residues long: Large ribosomal subunit protein bL32B (57 aa).

Belongs to the bacterial ribosomal protein bL32 family.

The sequence is that of Large ribosomal subunit protein bL32B (rpmF2) from Listeria innocua serovar 6a (strain ATCC BAA-680 / CLIP 11262).